A 615-amino-acid polypeptide reads, in one-letter code: DNA mismatch repair protein MutL (615 aa).

Belongs to the DNA mismatch repair MutL/HexB family.

Functionally, this protein is involved in the repair of mismatches in DNA. It is required for dam-dependent methyl-directed DNA mismatch repair. May act as a 'molecular matchmaker', a protein that promotes the formation of a stable complex between two or more DNA-binding proteins in an ATP-dependent manner without itself being part of a final effector complex. This is DNA mismatch repair protein MutL from Parabacteroides distasonis (strain ATCC 8503 / DSM 20701 / CIP 104284 / JCM 5825 / NCTC 11152).